Consider the following 159-residue polypeptide: Transcriptional repressor NrdR (159 aa).

A zinc finger spans residues 3–34; the sequence is CPFCRHDDTQVVDSRVSEDGAAIRRRRRCSAC. One can recognise an ATP-cone domain in the interval 49-139; it reads PFVVKKDGSR…VYRRFEDVSE (91 aa).

This sequence belongs to the NrdR family. Requires Zn(2+) as cofactor.

Its function is as follows. Negatively regulates transcription of bacterial ribonucleotide reductase nrd genes and operons by binding to NrdR-boxes. The polypeptide is Transcriptional repressor NrdR (Burkholderia cenocepacia (strain ATCC BAA-245 / DSM 16553 / LMG 16656 / NCTC 13227 / J2315 / CF5610) (Burkholderia cepacia (strain J2315))).